A 93-amino-acid polypeptide reads, in one-letter code: Small ribosomal subunit protein uS19 (93 aa).

Belongs to the universal ribosomal protein uS19 family.

Functionally, protein S19 forms a complex with S13 that binds strongly to the 16S ribosomal RNA. The polypeptide is Small ribosomal subunit protein uS19 (Limosilactobacillus fermentum (strain NBRC 3956 / LMG 18251) (Lactobacillus fermentum)).